A 189-amino-acid chain; its full sequence is Recombination protein RecR (189 aa).

A C4-type zinc finger spans residues 48–63 (CQTCFHLSAEPLCDIC). The 95-residue stretch at 71-165 (QLLCVVADSR…QVSRIAYGLP (95 aa)) folds into the Toprim domain.

Belongs to the RecR family.

Functionally, may play a role in DNA repair. It seems to be involved in an RecBC-independent recombinational process of DNA repair. It may act with RecF and RecO. This chain is Recombination protein RecR, found in Prochlorococcus marinus (strain MIT 9313).